The sequence spans 317 residues: Beta-ketoacyl-[acyl-carrier-protein] synthase III (317 aa).

Catalysis depends on residues C112 and H244. The interval 245 to 249 (QANLR) is ACP-binding. The active site involves N274.

Belongs to the thiolase-like superfamily. FabH family. As to quaternary structure, homodimer.

It localises to the cytoplasm. It catalyses the reaction malonyl-[ACP] + acetyl-CoA + H(+) = 3-oxobutanoyl-[ACP] + CO2 + CoA. The protein operates within lipid metabolism; fatty acid biosynthesis. In terms of biological role, catalyzes the condensation reaction of fatty acid synthesis by the addition to an acyl acceptor of two carbons from malonyl-ACP. Catalyzes the first condensation reaction which initiates fatty acid synthesis and may therefore play a role in governing the total rate of fatty acid production. Possesses both acetoacetyl-ACP synthase and acetyl transacylase activities. Its substrate specificity determines the biosynthesis of branched-chain and/or straight-chain of fatty acids. This chain is Beta-ketoacyl-[acyl-carrier-protein] synthase III, found in Escherichia coli O9:H4 (strain HS).